The primary structure comprises 274 residues: Glutamate racemase (274 aa).

Substrate contacts are provided by residues 10-11 (DS) and 42-43 (YG). C73 serves as the catalytic Proton donor/acceptor. 74-75 (NT) provides a ligand contact to substrate. The active-site Proton donor/acceptor is C184. Position 185-186 (185-186 (TH)) interacts with substrate.

The protein belongs to the aspartate/glutamate racemases family.

The enzyme catalyses L-glutamate = D-glutamate. The protein operates within cell wall biogenesis; peptidoglycan biosynthesis. Provides the (R)-glutamate required for cell wall biosynthesis. In Latilactobacillus sakei subsp. sakei (strain 23K) (Lactobacillus sakei subsp. sakei), this protein is Glutamate racemase.